Consider the following 101-residue polypeptide: Large ribosomal subunit protein eL30 (101 aa).

The protein belongs to the eukaryotic ribosomal protein eL30 family.

The protein is Large ribosomal subunit protein eL30 of Pyrobaculum neutrophilum (strain DSM 2338 / JCM 9278 / NBRC 100436 / V24Sta) (Thermoproteus neutrophilus).